A 228-amino-acid polypeptide reads, in one-letter code: Aquaporin Z (228 aa).

A run of 2 helical transmembrane segments spans residues 1–21 (MLNK…GGCG) and 23–43 (AILA…ALAF). The NPA 1 motif lies at 63-65 (NPA). Helical transmembrane passes span 82 to 102 (IPYW…LYVI), 129 to 149 (MMAG…IILG), and 154 to 174 (LAPA…IHLV). The short motif at 184-186 (NPA) is the NPA 2 element. A helical transmembrane segment spans residues 205-225 (LFWVAPLVGAVIGAIIWKGLL).

The protein belongs to the MIP/aquaporin (TC 1.A.8) family. As to quaternary structure, homotetramer.

It localises to the cell inner membrane. The enzyme catalyses H2O(in) = H2O(out). Channel that permits osmotically driven movement of water in both directions. It is involved in the osmoregulation and in the maintenance of cell turgor during volume expansion in rapidly growing cells. It mediates rapid entry or exit of water in response to abrupt changes in osmolarity. In Brucella melitensis biotype 1 (strain ATCC 23456 / CCUG 17765 / NCTC 10094 / 16M), this protein is Aquaporin Z.